Here is a 238-residue protein sequence, read N- to C-terminus: Histidine/lysine/arginine/ornithine transport system permease protein HisM (238 aa).

Residues 1 to 26 are Periplasmic-facing; it reads MIEILHEYWKPLLWTDGYRFTGVAIT. The region spanning 23–221 is the ABC transmembrane type-1 domain; the sequence is VAITLWLLIL…IISYVLISLF (199 aa). A helical transmembrane segment spans residues 27-47; sequence LWLLILSVVIGGVLALFLAIG. Residues 48-58 lie on the Cytoplasmic side of the membrane; it reads RVSSNKYIQFP. The chain crosses the membrane as a helical span at residues 59–79; it reads IWLFTYIFRGTPLYVQLLVFY. Over 80 to 104 the chain is Periplasmic; the sequence is SGMYTLEIVKGTEFLNAFFRSGLNC. Residues 105 to 125 form a helical membrane-spanning segment; the sequence is TVLALTLNTCAYTTEIFAGAI. At 126–157 the chain is on the cytoplasmic side; that stretch reads RSVPHGEIEAARAYGFSTFKMYRCIILPSALR. The chain crosses the membrane as a helical span at residues 158 to 178; it reads IALPAYSNEVILMLHSTALAF. At 179–199 the chain is on the periplasmic side; the sequence is TATVPDLLKIARDINAATYQP. A helical transmembrane segment spans residues 200–220; that stretch reads FTAFGIAAVLYLIISYVLISL. Topologically, residues 221–238 are cytoplasmic; sequence FRRAEKRWLQHVKPSSTH.

Belongs to the binding-protein-dependent transport system permease family. HisMQ subfamily. As to quaternary structure, the HisPMQJ complex is composed of two ATP-binding proteins (HisP), two transmembrane proteins (HisM and HisQ) and a solute-binding protein (HisJ). The HisPMQ-ArgT complex is composed of two ATP-binding proteins (HisP), two transmembrane proteins (HisM and HisQ) and a solute-binding protein (ArgT).

It localises to the cell inner membrane. In terms of biological role, part of the ABC transporter complex HisPMQJ involved in histidine transport. Is also part of the ABC transporter complex HisPMQ-ArgT involved in lysine/arginine/ornithine transport. Probably responsible for the translocation of the substrate across the membrane. This chain is Histidine/lysine/arginine/ornithine transport system permease protein HisM (hisM), found in Escherichia coli O157:H7.